A 412-amino-acid polypeptide reads, in one-letter code: P-selectin glycoprotein ligand 1 (412 aa).

Positions 1 to 17 are cleaved as a signal peptide; that stretch reads MPLQLLLLLILLGPGNS. A propeptide spanning residues 18–41 is cleaved from the precursor; the sequence is LQLWDTWADEAEKALGPLLARDRR. Residues 18-320 are Extracellular-facing; it reads LQLWDTWADE…APDHISVKQC (303 aa). Gln42 bears the Pyrrolidone carboxylic acid mark. Sulfotyrosine is present on residues Tyr46, Tyr48, and Tyr51. Residues 56–95 form a disordered region; it reads ETEPPEMLRNSTDTTPLTGPGTPESTTVEPAARRSTGLDA. A glycan (O-linked (GalNAc...) threonine) is linked at Thr57. The N-linked (GlcNAc...) asparagine glycan is linked to Asn65. The span at 66–82 shows a compositional bias: low complexity; the sequence is STDTTPLTGPGTPESTT. Asn111 is a glycosylation site (N-linked (GlcNAc...) asparagine). Repeat copies occupy residues 122-131, 132-141, 142-151, 162-171, 182-191, 192-201, 202-211, 212-221, 222-231, 232-241, 242-251, and 252-261. Residues 122 to 261 are 12 X 10 AA tandem repeats; the sequence is QTTQPAATEA…QTTPLAAMEA (140 aa). 2 disordered regions span residues 125 to 146 and 166 to 252; these read QPAA…TTPL and LAAT…TEAQ. Residue Asn302 is glycosylated (N-linked (GlcNAc...) asparagine). A helical transmembrane segment spans residues 321 to 341; it reads LLAILILALVATIFFVCTVVL. Residues 342-412 are Cytoplasmic-facing; that stretch reads AVRLSRKGHM…DDLTLHSFLP (71 aa). A disordered region spans residues 374-412; the sequence is EGPSATANGGLSKAKSPGLTPEPREDREGDDLTLHSFLP. The segment covering 395-406 has biased composition (basic and acidic residues); that stretch reads EPREDREGDDLT. Thr406 carries the post-translational modification Phosphothreonine. The residue at position 409 (Ser409) is a Phosphoserine.

In terms of assembly, homodimer; disulfide-linked. Interaction with P-, E- and L-selectins, through their lectin/EGF domains, is required for promoting recruitment and rolling of leukocytes. These interactions require sialyl Lewis X glycan modification but there is a differing dependence for tyrosine sulfations. Sulfation on Tyr-51 of PSGL1 is most important for high affinity L-selectin/SELL binding while P-selectin/SELP requires sulfation on Tyr-48. E-selectin/SELE binds with much lower affinity and requires the sLe(x) epitope, but apparently not tyrosine sulfation. Dimerization appears not to be required for P-selectin/SELP binding. Interacts with SNX20. Interacts with MSN and SYK; mediates the activation of SYK by SELPLG. Interacts with HAVCR1. As to quaternary structure, (Microbial infection) Interacts with enterovirus 71 capsid proteins. (Microbial infection) Interacts with Staphylococcus aureus proteins SSL5 and SSL11; these interactions prevent SELPLG-mediated neutrophil rolling. In terms of processing, displays complex, core-2, sialylated and fucosylated O-linked oligosaccharides, at least some of which appear to contain poly-N-acetyllactosamine with varying degrees of substitution. Mainly disialylated or neutral forms of the core-2 tetrasaccharide, Galbeta1--&gt;4GlcNAcbeta1--&gt;6(Galbeta1--&gt;3)GalNAcOH. The GlcN:GalN ratio is approximately 2:1 and the Man:Fuc ratio 3:5. Contains about 14% fucose with alpha-1,3 linkage present in two forms: One species is a disialylated, monofucosylated glycan, and the other, a monosialylated, trifucosylated glycan with a polylactosamine backbone. The fucosylated forms carry the Lewis antigen and are important for interaction with selectins and for functioning in leukocyte rolling. The modification containing the sialyl Lewis X glycan is on Thr-57. No sulfated O-glycans. Some N-glycosylation. Sulfation, in conjunction with the SLe(x)-containing glycan, is necessary for P- and L-selectin binding. High affinity P-selectin binding has a preferred requirement for the isomer sulfated on both Tyr-48 and Tyr-51, whereas L-selectin binding requires predominantly sulfation on Tyr-51 with sulfation on Tyr-48 playing only a minor role. These sulfations play an important role in L- and P-selectin-mediated neutrophil recruitment, and leukocyte rolling. Expressed on neutrophils, monocytes and most lymphocytes.

Its subcellular location is the membrane. An SLe(x)-type proteoglycan, which through high affinity, calcium-dependent interactions with E-, P- and L-selectins, mediates rapid rolling of leukocytes over vascular surfaces during the initial steps in inflammation. Critical for the initial leukocyte capture. In terms of biological role, (Microbial infection) Acts as a receptor for enterovirus 71. The chain is P-selectin glycoprotein ligand 1 (SELPLG) from Homo sapiens (Human).